Here is a 310-residue protein sequence, read N- to C-terminus: Acetylglutamate kinase (310 aa).

Residues 70–71 (GG), Arg92, and Asn191 contribute to the substrate site.

Belongs to the acetylglutamate kinase family. ArgB subfamily.

It is found in the cytoplasm. It carries out the reaction N-acetyl-L-glutamate + ATP = N-acetyl-L-glutamyl 5-phosphate + ADP. It participates in amino-acid biosynthesis; L-arginine biosynthesis; N(2)-acetyl-L-ornithine from L-glutamate: step 2/4. Functionally, catalyzes the ATP-dependent phosphorylation of N-acetyl-L-glutamate. The protein is Acetylglutamate kinase of Corynebacterium diphtheriae (strain ATCC 700971 / NCTC 13129 / Biotype gravis).